We begin with the raw amino-acid sequence, 405 residues long: 4-hydroxy-3-methylbut-2-en-1-yl diphosphate synthase (flavodoxin) (405 aa).

[4Fe-4S] cluster is bound by residues Cys-297, Cys-300, Cys-343, and Glu-350.

Belongs to the IspG family. The cofactor is [4Fe-4S] cluster.

It catalyses the reaction (2E)-4-hydroxy-3-methylbut-2-enyl diphosphate + oxidized [flavodoxin] + H2O + 2 H(+) = 2-C-methyl-D-erythritol 2,4-cyclic diphosphate + reduced [flavodoxin]. The protein operates within isoprenoid biosynthesis; isopentenyl diphosphate biosynthesis via DXP pathway; isopentenyl diphosphate from 1-deoxy-D-xylulose 5-phosphate: step 5/6. In terms of biological role, converts 2C-methyl-D-erythritol 2,4-cyclodiphosphate (ME-2,4cPP) into 1-hydroxy-2-methyl-2-(E)-butenyl 4-diphosphate. The sequence is that of 4-hydroxy-3-methylbut-2-en-1-yl diphosphate synthase (flavodoxin) from Francisella tularensis subsp. tularensis (strain FSC 198).